The chain runs to 340 residues: MKSLAKLKSEKGIWLHDSEMPTVGHNDILIKIRKTAICGTDMHIYNWDEWSQNTIPVPMVVGHEYVGEVVEIGEEVRGFAIGDRVSGEGHITCGHCRNCRAGRRHLCRNTSGVGVNRAGAFAEYLSIPAFNAFKIPDNISDDLAAIFDPFGNAVHTALSFDLVGEDVLITGAGPIGIMAAAVAQHVGARHVVITDVNEYRLDLARKMGASRAVNVAKESLKDVMNDLGMSEGFDVGLEMSGVPAAFRDMLDKMNHGGKVAMLGIPSGDVAVDWNKVIFKGLVIKGIYGREMFETWYKMASLIQGGLNLAPIITHQFNIDEFQQGFDTMGSGQSGKVILNW.

C38 serves as a coordination point for Zn(2+). Residues T40 and H43 each act as charge relay system in the active site. 6 residues coordinate Zn(2+): H63, E64, C93, C96, C99, and C107. Residues I175, D195, R200, 262–264, and 286–287 contribute to the NAD(+) site; these read LGI and IY.

It belongs to the zinc-containing alcohol dehydrogenase family. In terms of assembly, homotetramer. The cofactor is Zn(2+).

Its subcellular location is the cytoplasm. It catalyses the reaction L-threonine + NAD(+) = (2S)-2-amino-3-oxobutanoate + NADH + H(+). Its pathway is amino-acid degradation; L-threonine degradation via oxydo-reductase pathway; glycine from L-threonine: step 1/2. Its function is as follows. Catalyzes the NAD(+)-dependent oxidation of L-threonine to 2-amino-3-ketobutyrate. In Pseudoalteromonas atlantica (strain T6c / ATCC BAA-1087), this protein is L-threonine 3-dehydrogenase.